A 106-amino-acid chain; its full sequence is Iron-sulfur cluster assembly protein CyaY (106 aa).

The protein belongs to the frataxin family.

Functionally, involved in iron-sulfur (Fe-S) cluster assembly. May act as a regulator of Fe-S biogenesis. This is Iron-sulfur cluster assembly protein CyaY from Citrobacter koseri (strain ATCC BAA-895 / CDC 4225-83 / SGSC4696).